We begin with the raw amino-acid sequence, 454 residues long: Bifunctional protein GlmU (454 aa).

The segment at 1 to 231 (MDRATVSLIV…EAETLGVNTR (231 aa)) is pyrophosphorylase. UDP-N-acetyl-alpha-D-glucosamine is bound by residues 11 to 14 (LAAG), Lys-25, Gln-78, 83 to 84 (GT), 106 to 108 (YGD), Gly-143, Glu-157, Asn-172, and Asn-229. Residue Asp-108 coordinates Mg(2+). Asn-229 contributes to the Mg(2+) binding site. The tract at residues 232-252 (AQLAEAEAEFQKRARAAALED) is linker. The interval 253-454 (GVTLTAPDTV…AKAAKKKEAP (202 aa)) is N-acetyltransferase. Residues Arg-318 and Lys-336 each coordinate UDP-N-acetyl-alpha-D-glucosamine. His-348 serves as the catalytic Proton acceptor. UDP-N-acetyl-alpha-D-glucosamine contacts are provided by Tyr-351 and Asn-362. Acetyl-CoA-binding positions include Ala-365, 371–372 (NY), Ser-390, Ser-408, and Arg-425.

It in the N-terminal section; belongs to the N-acetylglucosamine-1-phosphate uridyltransferase family. The protein in the C-terminal section; belongs to the transferase hexapeptide repeat family. As to quaternary structure, homotrimer. Mg(2+) serves as cofactor.

Its subcellular location is the cytoplasm. It carries out the reaction alpha-D-glucosamine 1-phosphate + acetyl-CoA = N-acetyl-alpha-D-glucosamine 1-phosphate + CoA + H(+). It catalyses the reaction N-acetyl-alpha-D-glucosamine 1-phosphate + UTP + H(+) = UDP-N-acetyl-alpha-D-glucosamine + diphosphate. The protein operates within nucleotide-sugar biosynthesis; UDP-N-acetyl-alpha-D-glucosamine biosynthesis; N-acetyl-alpha-D-glucosamine 1-phosphate from alpha-D-glucosamine 6-phosphate (route II): step 2/2. It functions in the pathway nucleotide-sugar biosynthesis; UDP-N-acetyl-alpha-D-glucosamine biosynthesis; UDP-N-acetyl-alpha-D-glucosamine from N-acetyl-alpha-D-glucosamine 1-phosphate: step 1/1. It participates in bacterial outer membrane biogenesis; LPS lipid A biosynthesis. Catalyzes the last two sequential reactions in the de novo biosynthetic pathway for UDP-N-acetylglucosamine (UDP-GlcNAc). The C-terminal domain catalyzes the transfer of acetyl group from acetyl coenzyme A to glucosamine-1-phosphate (GlcN-1-P) to produce N-acetylglucosamine-1-phosphate (GlcNAc-1-P), which is converted into UDP-GlcNAc by the transfer of uridine 5-monophosphate (from uridine 5-triphosphate), a reaction catalyzed by the N-terminal domain. The protein is Bifunctional protein GlmU of Cereibacter sphaeroides (strain ATCC 17023 / DSM 158 / JCM 6121 / CCUG 31486 / LMG 2827 / NBRC 12203 / NCIMB 8253 / ATH 2.4.1.) (Rhodobacter sphaeroides).